The primary structure comprises 802 residues: Protein SBE22 (802 aa).

Disordered stretches follow at residues 207 to 230 (SSTINANNMKSTGTLPPFRPRSNS) and 323 to 345 (SGDPKHVRSHQSKPQPRFPQRHN).

It belongs to the SBE2 family.

It is found in the cytoplasm. The protein localises to the golgi apparatus. With SBE2, is involved in cell wall integrity and polarity processes like bud growth. The protein is Protein SBE22 (SBE22) of Vanderwaltozyma polyspora (strain ATCC 22028 / DSM 70294 / BCRC 21397 / CBS 2163 / NBRC 10782 / NRRL Y-8283 / UCD 57-17) (Kluyveromyces polysporus).